Reading from the N-terminus, the 482-residue chain is Aspartyl/glutamyl-tRNA(Asn/Gln) amidotransferase subunit B (482 aa).

Belongs to the GatB/GatE family. GatB subfamily. In terms of assembly, heterotrimer of A, B and C subunits.

It catalyses the reaction L-glutamyl-tRNA(Gln) + L-glutamine + ATP + H2O = L-glutaminyl-tRNA(Gln) + L-glutamate + ADP + phosphate + H(+). The catalysed reaction is L-aspartyl-tRNA(Asn) + L-glutamine + ATP + H2O = L-asparaginyl-tRNA(Asn) + L-glutamate + ADP + phosphate + 2 H(+). Allows the formation of correctly charged Asn-tRNA(Asn) or Gln-tRNA(Gln) through the transamidation of misacylated Asp-tRNA(Asn) or Glu-tRNA(Gln) in organisms which lack either or both of asparaginyl-tRNA or glutaminyl-tRNA synthetases. The reaction takes place in the presence of glutamine and ATP through an activated phospho-Asp-tRNA(Asn) or phospho-Glu-tRNA(Gln). This chain is Aspartyl/glutamyl-tRNA(Asn/Gln) amidotransferase subunit B, found in Ehrlichia canis (strain Jake).